Reading from the N-terminus, the 374-residue chain is Phenoloxidase-activating enzyme 1 (374 aa).

The N-terminal stretch at 1–19 (MWKSLVFFVSALIWSFGSS) is a signal peptide. Residues 20-120 (QDCTTPTGSR…QCGIDTTGDR (101 aa)) constitute a propeptide, activation peptide. The 54-residue stretch at 21 to 74 (DCTTPTGSRSNCVSLYQCQPLYNAFEQRPLPTHVVSYLGRSQCGFEGYVPRVCC) folds into the Clip domain. 3 disulfides stabilise this stretch: Cys-22–Cys-73, Cys-32–Cys-63, and Cys-38–Cys-74. Over residues 83-97 (ATSARPTQAPTQGSS) the composition is skewed to polar residues. Residues 83–114 (ATSARPTQAPTQGSSDVFPEDSSPAPRNQCGI) form a disordered region. A Peptidase S1 domain is found at 121-370 (VYGGTITDLD…YIDWIQNTIA (250 aa)). A disulfide bridge links Cys-151 with Cys-167. His-166 serves as the catalytic Charge relay system. Residues Glu-186 and Asp-194 each coordinate Ca(2+). The Charge relay system role is filled by Asp-228. 2 cysteine pairs are disulfide-bonded: Cys-292–Cys-307 and Cys-317–Cys-346. The Charge relay system role is filled by Ser-321.

Belongs to the peptidase S1 family. CLIP subfamily. Post-translationally, activated by the removal of the N-terminal inhibitory propeptide. Expressed in hemocytes.

It localises to the secreted. Inhibited by aprotenin. Not inhibited by EDTA, PMSF or leupeptin. Functionally, serine protease which, by cleaving and activating prophenoloxidase (PPO1) after immune challenge, plays an essential role in the melanization immune response to wounding. The chain is Phenoloxidase-activating enzyme 1 from Spodoptera litura (Asian cotton leafworm).